Consider the following 636-residue polypeptide: Dehydrogenase ARMGADRAFT_1018426 (636 aa).

The N-terminal stretch at 1-19 is a signal peptide; sequence MPALTYLLLAAIGASTVHS. FAD-binding positions include 49 to 50 and 70 to 71; these read TA and EG. The N-linked (GlcNAc...) asparagine glycan is linked to N99. FAD is bound by residues W104 and 134–137; that span reads NGLT. A glycan (N-linked (GlcNAc...) asparagine) is linked at N253. V280 provides a ligand contact to FAD. Residues N333, N380, N394, and N498 are each glycosylated (N-linked (GlcNAc...) asparagine). H570 (proton acceptor) is an active-site residue. FAD-binding positions include A603 and 614 to 615; that span reads PS.

It belongs to the GMC oxidoreductase family. FAD serves as cofactor.

It participates in secondary metabolite biosynthesis. Functionally, dehydrogenase, part of the gene cluster that mediates the biosynthesis of melleolides, a range of antifungal and phytotoxic polyketide derivatives composed of an orsellinic acid (OA) moiety esterified to various sesquiterpene alcohols. The first step in melleolides biosynthesis is performed by the delta(6)-protoilludene synthase PRO1 which catalyzes the cyclization of farnesyl diphosphate to protoilludene. The orsellinic acid synthase armB produces OA by condensing acetyl-CoA with 3 malonyl-CoA units in a three-round chain elongation reaction folowed by a C2-C7 ring closure. ArmB further catalyzes the trans-esterification of OA to the various sesquiterpene alcohols resulting from the hydroxylation of protoilludene. The melleolides cluster also includes 5 cytochrome P450 monooxygenases, 4 NAD(+)-dependent oxidoreductases, one flavin-dependent oxidoreductase, and one O-methyltransferase. The cytochrome P450 monooxygenases may be involved in protoilludene hydroxylation to elaborate melleolides with multiple alcohol groups, such as melleolide D, which carries alcohol functionalities at C-4, C-5, C-10, and C-13. The role of the NAD(+)-dependent enzymes remains unknown. Numerous melleolides, including arnamial, show 5'-O-methylation of the aromatic moiety which may be catalyzed by the methyltransferase encoded in the cluster. The flavin-dependent oxidoreductase might represent the dehydrogenase yielding the aldehyde in position 1 of arnamial and other melleolides. Finally, several halogenase localized outside of the cluster, are able to catalyze the transfer of a single chlorine atom to the melleolide backbone, resulting in a 6'-chloromelleolide product. This chain is Dehydrogenase ARMGADRAFT_1018426, found in Armillaria gallica (Bulbous honey fungus).